The chain runs to 91 residues: Small ribosomal subunit protein bS18 (91 aa).

Belongs to the bacterial ribosomal protein bS18 family. Part of the 30S ribosomal subunit. Forms a tight heterodimer with protein bS6.

Functionally, binds as a heterodimer with protein bS6 to the central domain of the 16S rRNA, where it helps stabilize the platform of the 30S subunit. In Wolbachia sp. subsp. Brugia malayi (strain TRS), this protein is Small ribosomal subunit protein bS18.